Here is a 680-residue protein sequence, read N- to C-terminus: Viral IRF2-like protein (680 aa).

The segment at residues serine 7–methionine 103 is a DNA-binding region (IRF tryptophan pentad repeat). Disordered regions lie at residues serine 156–glutamate 201, glutamate 220–threonine 257, glutamate 343–serine 365, and alanine 403–serine 423. Low complexity predominate over residues lysine 168–serine 188. A compositionally biased stretch (acidic residues) spans glutamate 191–asparagine 200. The segment covering glutamate 220–aspartate 240 has biased composition (low complexity).

This sequence belongs to the IRF family. As to quaternary structure, interacts with host EIF2AK2/PKR. Interacts with host USP7.

The protein resides in the host nucleus. It localises to the host cytoplasm. DNA-binding transcription factor that plays a role in the modulation of host immune response. Acts by interacting with host EIF2AK2/PKR and inhibiting its activation. In turn, EIF2AK2/PKR substrates including EIF2S1 or histone H2A are not phosphorylated. Inhibits type I interferon signaling by targeting host IRF3 during viral reactivation from latency. Attenuates the transcriptional activity of host FOXO3 via activation of the AKT1 signaling pathway, inhibiting FOXO3-mediated apoptosis. Also suppresses the expression of viral early lytic genes in both newly infected and reactivated infected host cells allowing regulation of viral life cycle by harnessing the interferon pathway. Mechanistically, promotes host PML bodies formation as well as host antiviral restriction factors IFIT1-3 expression leading to inhibition of viral early lytic proteins. Also regulates host TRAF3 and TRAF6 ubiquitination by interacting with USP7 deubiquitinase thereby influencing TRAF3/6-mediated signal transduction. The chain is Viral IRF2-like protein (vIRF-2) from Human herpesvirus 8 type P (isolate GK18) (HHV-8).